Here is a 252-residue protein sequence, read N- to C-terminus: Short-chain dehydrogenase/reductase eriH (252 aa).

8 residues coordinate NADP(+): isoleucine 16, aspartate 65, asparagine 92, lysine 125, tyrosine 158, lysine 162, valine 191, and threonine 193. Tyrosine 158 functions as the Proton acceptor in the catalytic mechanism. The Proton donor role is filled by tyrosine 158. The Lowers pKa of active site Tyr role is filled by lysine 162.

Belongs to the short-chain dehydrogenases/reductases (SDR) family.

The catalysed reaction is cyathadiol + reduced [NADPH--hemoprotein reductase] + O2 = cyathatriol + oxidized [NADPH--hemoprotein reductase] + H2O + H(+). It carries out the reaction 11-O-acetylcyathatriol + A = 11-O-acetylcyathin A3 + AH2. The enzyme catalyses cyathatriol + A = cyathin A3 + AH2. It participates in secondary metabolite biosynthesis. Its function is as follows. Short-chain dehydrogenase/reductase; part of the gene cluster that mediates the biosynthesis of erinacines, cyathane-xylosides that show unique biological activities, including leishmanicidal activity, stimulating activity for nerve growth-factor synthesis, and agonistic activity toward the kappa opioid receptor. Within the pathway, eriH works with eriA to catalyze C-11 hydroxylation of cyathadiol to produce cyathatriol. EriH also catalyzes oxidation of 11-O-acetyl-cyathatriol into 1-O-acetylcyathin A3. In the absence of eriL and eriJ, the SDR eriH is able to convert cyathatriol to cyathin A3; this is likely a switching mechanism in the biosynthesis of cyathins (C-14 ketogroup)and erinacines (C-14 glycosylated group). The first step of the erinacines biosynthesis pathway is catalyzed by the geranylgeranyl diphosphate (GGPP) synthase eriE via conversion of farnesyl pyrophosphate and isopentyl pyrophosphate into geranylgeranyl pyrophosphate (GGPP). GGPP is then substrate of the diterpene cyclase eriG for the production of cyatha-3,12-diene. The cytochrome P450 monooxygenase eriI then hydroxylates cyatha-3,12-diene at C-14 of the seven-membered ring to produce erinacol, which is further hydroxylated at C-15 by the cytochrome P450 monooxygenase eriC to yield cyathadiol. The cytochrome P450 monooxygenase eriA then catalyzes C-11 hydroxylation in the presence of the short chain dehydrogenase/reductase (SDR) eriH, which leads to the production of cyathatriol. The acetyltransferase eriL converts cyathatriol into 11-O-acetyl-cyathatriol. The SDR eriH catalyzes further oxidation of 11-O-acetyl-cyathatriol into 1-O-acetylcyathin A3. Finally, the glycosyl transferase eriJ tranfers xylose from UDP-xylose onto C-14 of 11-O-acetyl-cyathatriol to form eracine Q. EriJ is also able to convert 11-O-acetyl-cyathatriol to eracine Q2 by using UDP-D-glucose as cosubstrate, but at a lower rate. This chain is Short-chain dehydrogenase/reductase eriH, found in Hericium erinaceus (Lion's mane mushroom).